We begin with the raw amino-acid sequence, 403 residues long: Phosphopentomutase (403 aa).

The Mn(2+) site is built by Asp-13, Asp-298, His-303, Asp-339, His-340, and His-351.

It belongs to the phosphopentomutase family. Mn(2+) serves as cofactor.

The protein localises to the cytoplasm. The enzyme catalyses 2-deoxy-alpha-D-ribose 1-phosphate = 2-deoxy-D-ribose 5-phosphate. It carries out the reaction alpha-D-ribose 1-phosphate = D-ribose 5-phosphate. It functions in the pathway carbohydrate degradation; 2-deoxy-D-ribose 1-phosphate degradation; D-glyceraldehyde 3-phosphate and acetaldehyde from 2-deoxy-alpha-D-ribose 1-phosphate: step 1/2. In terms of biological role, isomerase that catalyzes the conversion of deoxy-ribose 1-phosphate (dRib-1-P) and ribose 1-phosphate (Rib-1-P) to deoxy-ribose 5-phosphate (dRib-5-P) and ribose 5-phosphate (Rib-5-P), respectively. This Streptococcus uberis (strain ATCC BAA-854 / 0140J) protein is Phosphopentomutase.